The chain runs to 197 residues: dITP/XTP pyrophosphatase (197 aa).

8–13 (TGNPGK) provides a ligand contact to substrate. Mg(2+)-binding residues include Glu-40 and Asp-69. Asp-69 acts as the Proton acceptor in catalysis. Substrate contacts are provided by residues Ser-70, 154–157 (FGYD), Lys-177, and 182–183 (HR).

This sequence belongs to the HAM1 NTPase family. As to quaternary structure, homodimer. Requires Mg(2+) as cofactor.

The enzyme catalyses XTP + H2O = XMP + diphosphate + H(+). The catalysed reaction is dITP + H2O = dIMP + diphosphate + H(+). It carries out the reaction ITP + H2O = IMP + diphosphate + H(+). Pyrophosphatase that catalyzes the hydrolysis of nucleoside triphosphates to their monophosphate derivatives, with a high preference for the non-canonical purine nucleotides XTP (xanthosine triphosphate), dITP (deoxyinosine triphosphate) and ITP. Seems to function as a house-cleaning enzyme that removes non-canonical purine nucleotides from the nucleotide pool, thus preventing their incorporation into DNA/RNA and avoiding chromosomal lesions. The sequence is that of dITP/XTP pyrophosphatase from Photorhabdus laumondii subsp. laumondii (strain DSM 15139 / CIP 105565 / TT01) (Photorhabdus luminescens subsp. laumondii).